The primary structure comprises 178 residues: Large ribosomal subunit protein uL6 (178 aa).

This sequence belongs to the universal ribosomal protein uL6 family. In terms of assembly, part of the 50S ribosomal subunit.

Functionally, this protein binds to the 23S rRNA, and is important in its secondary structure. It is located near the subunit interface in the base of the L7/L12 stalk, and near the tRNA binding site of the peptidyltransferase center. This Gluconobacter oxydans (strain 621H) (Gluconobacter suboxydans) protein is Large ribosomal subunit protein uL6.